Consider the following 117-residue polypeptide: Large ribosomal subunit protein bL20 (117 aa).

Belongs to the bacterial ribosomal protein bL20 family.

In terms of biological role, binds directly to 23S ribosomal RNA and is necessary for the in vitro assembly process of the 50S ribosomal subunit. It is not involved in the protein synthesizing functions of that subunit. The polypeptide is Large ribosomal subunit protein bL20 (Nitratidesulfovibrio vulgaris (strain DSM 19637 / Miyazaki F) (Desulfovibrio vulgaris)).